A 43-amino-acid polypeptide reads, in one-letter code: Thaumatin-like protein 1 (43 aa).

It belongs to the thaumatin family.

The polypeptide is Thaumatin-like protein 1 (Glebionis coronaria (Crown daisy)).